Here is a 195-residue protein sequence, read N- to C-terminus: Imidazoleglycerol-phosphate dehydratase (195 aa).

Belongs to the imidazoleglycerol-phosphate dehydratase family.

The protein localises to the cytoplasm. It carries out the reaction D-erythro-1-(imidazol-4-yl)glycerol 3-phosphate = 3-(imidazol-4-yl)-2-oxopropyl phosphate + H2O. The protein operates within amino-acid biosynthesis; L-histidine biosynthesis; L-histidine from 5-phospho-alpha-D-ribose 1-diphosphate: step 6/9. In Shouchella clausii (strain KSM-K16) (Alkalihalobacillus clausii), this protein is Imidazoleglycerol-phosphate dehydratase.